A 151-amino-acid polypeptide reads, in one-letter code: Ribosome maturation factor RimP (151 aa).

This sequence belongs to the RimP family.

It localises to the cytoplasm. Required for maturation of 30S ribosomal subunits. The polypeptide is Ribosome maturation factor RimP (Shewanella sp. (strain MR-4)).